A 283-amino-acid chain; its full sequence is Ribosomal RNA small subunit methyltransferase H (283 aa).

S-adenosyl-L-methionine-binding positions include 31 to 33 (GGH), Asp-50, Phe-77, Asp-93, and Gln-100.

This sequence belongs to the methyltransferase superfamily. RsmH family.

The protein localises to the cytoplasm. The enzyme catalyses cytidine(1402) in 16S rRNA + S-adenosyl-L-methionine = N(4)-methylcytidine(1402) in 16S rRNA + S-adenosyl-L-homocysteine + H(+). Functionally, specifically methylates the N4 position of cytidine in position 1402 (C1402) of 16S rRNA. The protein is Ribosomal RNA small subunit methyltransferase H of Trichodesmium erythraeum (strain IMS101).